The primary structure comprises 61 residues: Small ribosomal subunit protein uS14 (61 aa).

Zn(2+) is bound by residues C24, C27, C40, and C43.

The protein belongs to the universal ribosomal protein uS14 family. Zinc-binding uS14 subfamily. As to quaternary structure, part of the 30S ribosomal subunit. Contacts proteins S3 and S10. Requires Zn(2+) as cofactor.

Binds 16S rRNA, required for the assembly of 30S particles and may also be responsible for determining the conformation of the 16S rRNA at the A site. The polypeptide is Small ribosomal subunit protein uS14 (Campylobacter lari (strain RM2100 / D67 / ATCC BAA-1060)).